The sequence spans 260 residues: tRNA (guanine-N(1)-)-methyltransferase (260 aa).

Residues G117 and 137–142 (LGDFVL) contribute to the S-adenosyl-L-methionine site.

This sequence belongs to the RNA methyltransferase TrmD family. Homodimer.

It is found in the cytoplasm. It catalyses the reaction guanosine(37) in tRNA + S-adenosyl-L-methionine = N(1)-methylguanosine(37) in tRNA + S-adenosyl-L-homocysteine + H(+). Specifically methylates guanosine-37 in various tRNAs. The polypeptide is tRNA (guanine-N(1)-)-methyltransferase (Cupriavidus necator (strain ATCC 17699 / DSM 428 / KCTC 22496 / NCIMB 10442 / H16 / Stanier 337) (Ralstonia eutropha)).